The primary structure comprises 210 residues: 3-hexulose-6-phosphate synthase 1 (210 aa).

Belongs to the HPS/KGPDC family. HPS subfamily.

It carries out the reaction D-ribulose 5-phosphate + formaldehyde = D-arabino-hex-3-ulose 6-phosphate. The protein operates within one-carbon metabolism; formaldehyde assimilation via RuMP pathway; D-fructose 6-phosphate from D-ribulose 5-phosphate and formaldehyde: step 1/2. Its function is as follows. Catalyzes the condensation of ribulose 5-phosphate with formaldehyde to form 3-hexulose 6-phosphate. The protein is 3-hexulose-6-phosphate synthase 1 of Staphylococcus saprophyticus subsp. saprophyticus (strain ATCC 15305 / DSM 20229 / NCIMB 8711 / NCTC 7292 / S-41).